A 594-amino-acid chain; its full sequence is Actin-histidine N-methyltransferase (594 aa).

The segment at 1-22 is disordered; the sequence is MGKKSRVKTQKSGTGATATVSP. Polar residues predominate over residues 10–20; sequence QKSGTGATATV. Residues Arg75, 104–106, Arg254, 275–279, and 325–327 each bind S-adenosyl-L-methionine; these read EGF, DMCNH, and SGF. Residues 94–314 form the SET domain; that stretch reads EGFEMVNFKE…AGDQIYIFYG (221 aa). Residues 551-594 form a disordered region; the sequence is GLVNGENLIPNGTRSENESLSPEESENVTGEESSGSMAKVKERL.

The protein belongs to the class V-like SAM-binding methyltransferase superfamily. SETD3 actin-histidine methyltransferase family. In terms of assembly, interacts with MYOD1. In terms of processing, phosphorylated by GSK3B, which is required for recognition by the SCF(FBXW7) complex and subsequent degradation. Ubiquitinated by the SCF(FBXW7) complex following phosphorylation by GSK3B, leading to its degradation by the proteasome. Prominently expressed in the heart and skeletal muscles and is also detected weakly in the stomach, small intestine, and colon.

The protein resides in the cytoplasm. Its subcellular location is the nucleus. The catalysed reaction is L-histidyl-[protein] + S-adenosyl-L-methionine = N(tele)-methyl-L-histidyl-[protein] + S-adenosyl-L-homocysteine + H(+). Functionally, protein-histidine N-methyltransferase that specifically mediates 3-methylhistidine (tele-methylhistidine) methylation of actin at 'His-73'. Histidine methylation of actin is required for smooth muscle contraction of the laboring uterus during delivery. Does not have protein-lysine N-methyltransferase activity and probably only catalyzes histidine methylation of actin. The chain is Actin-histidine N-methyltransferase from Mus musculus (Mouse).